The primary structure comprises 395 residues: Acetate kinase (395 aa).

Asn-7 contacts Mg(2+). ATP is bound at residue Lys-14. Arg-88 contributes to the substrate binding site. The active-site Proton donor/acceptor is Asp-145. ATP contacts are provided by residues 205–209 (HLGNG), 279–281 (DFR), and 327–331 (GIGEN). Residue Glu-381 coordinates Mg(2+).

Belongs to the acetokinase family. As to quaternary structure, homodimer. Mg(2+) serves as cofactor. The cofactor is Mn(2+).

The protein localises to the cytoplasm. It catalyses the reaction acetate + ATP = acetyl phosphate + ADP. Its pathway is metabolic intermediate biosynthesis; acetyl-CoA biosynthesis; acetyl-CoA from acetate: step 1/2. Functionally, catalyzes the formation of acetyl phosphate from acetate and ATP. Can also catalyze the reverse reaction. This chain is Acetate kinase, found in Campylobacter jejuni subsp. jejuni serotype O:6 (strain 81116 / NCTC 11828).